The chain runs to 667 residues: Transcription factor 4 (667 aa).

The essential for MYOD1 inhibition stretch occupies residues 1-83; it reads MHHQQRMAAL…GTPYDHMTSR (83 aa). Residues 18–26 carry the 9aaTAD motif; it reads DLLDFSAMF. 5 disordered regions span residues 24–245, 263–321, 336–379, 466–570, and 634–667; these read AMFS…LGNS, LSYP…SQTG, HTNN…EGPL, SLLP…MANN, and KRREEEKVSSEPPPLSLAGPHPGMGDASNHMGQM. The span at 29 to 49 shows a compositional bias: polar residues; that stretch reads PVSSGKNGPTSLASGHFTGSN. S66, S87, and S92 each carry phosphoserine. 4 stretches are compositionally biased toward polar residues: residues 107–126, 137–155, 205–216, and 266–306; these read GSYSSYGRESNLQGCHQQSL, GTLSPTKPGSQYYQYSSNN, KPATSTFPSSFF, and PSHS…TDSI. Over residues 337-348 the composition is skewed to low complexity; it reads TNNSFSSNPSTP. The segment covering 365–374 has biased composition (polar residues); the sequence is NGGQASSSPN. S372 carries the post-translational modification Phosphoserine. Residues 379–400 are leucine-zipper; it reads LHSLQSRIEDRLERLDDAIHVL. Low complexity-rich tracts occupy residues 467–480 and 503–512; these read LLPNQVPVPQLPVQ and GQSVSSGSSE. S515 bears the Phosphoserine mark. Basic and acidic residues-rich tracts occupy residues 527–542 and 555–570; these read KSSEDKKLDDDKKDIK and PEQKAEREKERRMANN. The bHLH domain occupies 564 to 617; sequence ERRMANNARERLRVRDINEAFKELGRMVQLHLKSDKPQTKLLILHQAVAVILSL. The tract at residues 619–642 is class A specific domain; that stretch reads QQVRERNLNPKAACLKRREEEKVS.

As to quaternary structure, efficient DNA binding requires dimerization with another bHLH protein. Forms homo- or heterooligomers with myogenin. Interacts with HIVEP2. Interacts with NEUROD2. Interacts with AGBL1. Interacts with BHLHA9. Expressed in adult heart, brain, placenta, skeletal muscle and to a lesser extent in the lung. In developing embryonic tissues, expression mostly occurs in the brain.

It localises to the nucleus. Functionally, transcription factor that binds to the immunoglobulin enhancer Mu-E5/KE5-motif. Involved in the initiation of neuronal differentiation. Activates transcription by binding to the E box (5'-CANNTG-3'). Binds to the E-box present in the somatostatin receptor 2 initiator element (SSTR2-INR) to activate transcription. Preferentially binds to either 5'-ACANNTGT-3' or 5'-CCANNTGG-3'. The chain is Transcription factor 4 (TCF4) from Homo sapiens (Human).